Reading from the N-terminus, the 65-residue chain is Sec-independent protein translocase protein TatA (65 aa).

The chain crosses the membrane as a helical span at residues 1–21 (MFGLGGQELVLILLIILLLFG).

The protein belongs to the TatA/E family. In terms of assembly, forms a complex with TatC.

It is found in the cell inner membrane. Its function is as follows. Part of the twin-arginine translocation (Tat) system that transports large folded proteins containing a characteristic twin-arginine motif in their signal peptide across membranes. TatA could form the protein-conducting channel of the Tat system. This Chlorobium phaeobacteroides (strain DSM 266 / SMG 266 / 2430) protein is Sec-independent protein translocase protein TatA.